Consider the following 372-residue polypeptide: Putative F-box/kelch-repeat protein At3g22730 (372 aa).

The region spanning 1–50 (MMMSDLSLDLVEEILSRVPATSLKRLRSTCKLWNALFKNPGFTKKQFLKA) is the F-box domain. Kelch repeat units lie at residues 155-204 (ILRC…SFKG), 245-293 (ALSV…PIRG), and 324-372 (KVYI…IIKE).

This chain is Putative F-box/kelch-repeat protein At3g22730, found in Arabidopsis thaliana (Mouse-ear cress).